The primary structure comprises 148 residues: Leghemoglobin 2 (148 aa).

In terms of domain architecture, Globin spans 2–148; that stretch reads GFTEKQEALV…LSAAIKKAMS (147 aa). Nitrated tyrosine is present on Tyr-30. Heme b is bound at residue Ser-45. The residue at position 45 (Ser-45) is a Phosphoserine. His-63 serves as a coordination point for O2. 3 residues coordinate heme b: Lys-66, His-95, and Lys-98. Tyr-136 is subject to Nitrated tyrosine.

The protein belongs to the plant globin family. In terms of assembly, monomer. In terms of processing, nitrated in effective nodules and particularly in hypoxic conditions; this mechanism may play a protective role in the symbiosis by buffering toxic peroxynitrite NO(2)(-). Nitration level decrease during nodule senescence. Phosphorylation at Ser-45 disrupts the molecular environment of its porphyrin ring oxygen binding pocket, thus leading to a reduced oxygen consumption and to the delivery of oxygen O(2) to symbiosomes. Stem nodules.

The protein localises to the cytoplasm. Its subcellular location is the cytosol. The protein resides in the nucleus. Functionally, leghemoglobin that reversibly binds oxygen O(2) through a pentacoordinated heme iron. In stem nodules, facilitates the diffusion of oxygen to the bacteroids while preventing the bacterial nitrogenase from being inactivated by buffering dioxygen, nitric oxide and carbon monoxide, and promoting the formation of reactive oxygen species (ROS, e.g. H(2)O(2)). This role is essential for symbiotic nitrogen fixation (SNF). This chain is Leghemoglobin 2, found in Sesbania rostrata.